We begin with the raw amino-acid sequence, 673 residues long: ATP-dependent DNA helicase Rep (673 aa).

Positions 1–280 (MRLNPGQQQA…IKLEQNYRSS (280 aa)) constitute a UvrD-like helicase ATP-binding domain. ATP contacts are provided by residues 22–29 (AGAGSGKT) and Arg278. Positions 281 to 562 (GRILKAANIL…QLMTLHASKG (282 aa)) constitute a UvrD-like helicase C-terminal domain.

It belongs to the helicase family. UvrD subfamily. In terms of assembly, homodimer in association with DNA.

The enzyme catalyses Couples ATP hydrolysis with the unwinding of duplex DNA by translocating in the 3'-5' direction.. It catalyses the reaction ATP + H2O = ADP + phosphate + H(+). With respect to regulation, binding to DNA induces dimerization, which is required for DNA helicase activity. Helicase activity is stimulated by PriC. In terms of biological role, rep helicase is a single-stranded (ss)DNA-dependent ATPase involved in DNA replication; it can initiate unwinding at a nick in the DNA. It binds to ssDNA and acts in a progressive fashion along the DNA in the 3' to 5' direction. Binds double-stranded (ds)DNA with a 5' ss- but not 3' ss-extension and forked structures with either lagging or leading ssDNA. Part of the PriC-Rep pathway for restart of stalled replication forks, which reloads the DnaB replicative helicase on sites other than the origin of replication. The protein is ATP-dependent DNA helicase Rep of Escherichia coli (strain K12).